A 462-amino-acid chain; its full sequence is UDP-N-acetylmuramate--L-alanine ligase (462 aa).

Residue Gly117–Thr123 coordinates ATP.

It belongs to the MurCDEF family.

Its subcellular location is the cytoplasm. The enzyme catalyses UDP-N-acetyl-alpha-D-muramate + L-alanine + ATP = UDP-N-acetyl-alpha-D-muramoyl-L-alanine + ADP + phosphate + H(+). Its pathway is cell wall biogenesis; peptidoglycan biosynthesis. Functionally, cell wall formation. The chain is UDP-N-acetylmuramate--L-alanine ligase from Streptomyces coelicolor (strain ATCC BAA-471 / A3(2) / M145).